Reading from the N-terminus, the 76-residue chain is Lividin-2 (76 aa).

Residues Met1–Cys22 form the signal peptide. The propeptide occupies Gln23–Val41. Cys70 and Cys76 are oxidised to a cystine.

Expressed by the skin glands.

Its subcellular location is the secreted. Antimicrobial peptide. This Odorrana livida (Green mountain frog) protein is Lividin-2.